Here is a 202-residue protein sequence, read N- to C-terminus: Josephin-1 (202 aa).

Residues 1-22 (MSCVPWKGDKAKAESSDLPQAA) form a disordered region. Serine 15 is subject to Phosphoserine. The Josephin domain occupies 23 to 202 (PPQIYHEKQR…EAHQSWRADV (180 aa)). Cysteine 36 serves as the catalytic Nucleophile. Catalysis depends on histidine 139, which acts as the Proton acceptor.

In terms of assembly, interacts with beta-actin/ACTB. Monoubiquitinated. Ubiquitination activates deubiquitination activity in vitro. In terms of tissue distribution, widely expressed (at protein level).

The protein localises to the cell membrane. It localises to the cytoplasm. It catalyses the reaction Thiol-dependent hydrolysis of ester, thioester, amide, peptide and isopeptide bonds formed by the C-terminal Gly of ubiquitin (a 76-residue protein attached to proteins as an intracellular targeting signal).. Its function is as follows. Deubiquitinates monoubiquitinated probes (in vitro). When ubiquitinated, cleaves 'Lys-63'-linked and 'Lys-48'-linked poly-ubiquitin chains (in vitro), hence may act as a deubiquitinating enzyme. May increase macropinocytosis and suppress clathrin- and caveolae-mediated endocytosis. May enhance membrane dynamics and cell motility independently of its catalytic activity. This chain is Josephin-1 (Josd1), found in Mus musculus (Mouse).